A 340-amino-acid polypeptide reads, in one-letter code: Lipoyl synthase (340 aa).

7 residues coordinate [4Fe-4S] cluster: cysteine 83, cysteine 88, cysteine 94, cysteine 109, cysteine 113, cysteine 116, and serine 323. The Radical SAM core domain occupies 95–312 (FSGGTATFMI…AEEGYKMGFK (218 aa)).

It belongs to the radical SAM superfamily. Lipoyl synthase family. [4Fe-4S] cluster is required as a cofactor.

The protein localises to the cytoplasm. The catalysed reaction is [[Fe-S] cluster scaffold protein carrying a second [4Fe-4S](2+) cluster] + N(6)-octanoyl-L-lysyl-[protein] + 2 oxidized [2Fe-2S]-[ferredoxin] + 2 S-adenosyl-L-methionine + 4 H(+) = [[Fe-S] cluster scaffold protein] + N(6)-[(R)-dihydrolipoyl]-L-lysyl-[protein] + 4 Fe(3+) + 2 hydrogen sulfide + 2 5'-deoxyadenosine + 2 L-methionine + 2 reduced [2Fe-2S]-[ferredoxin]. It participates in protein modification; protein lipoylation via endogenous pathway; protein N(6)-(lipoyl)lysine from octanoyl-[acyl-carrier-protein]: step 2/2. Catalyzes the radical-mediated insertion of two sulfur atoms into the C-6 and C-8 positions of the octanoyl moiety bound to the lipoyl domains of lipoate-dependent enzymes, thereby converting the octanoylated domains into lipoylated derivatives. The polypeptide is Lipoyl synthase (Pseudomonas fluorescens (strain Pf0-1)).